The following is a 1400-amino-acid chain: Tiny macrocysts protein C (1400 aa).

The next 8 membrane-spanning stretches (helical) occupy residues I59 to Q79, I112 to A132, F152 to L172, A196 to F216, F240 to F260, S266 to Y286, S296 to N316, and T320 to F340. 2 disordered regions span residues F367–T393 and E683–Y712. Residues E369–S386 show a composition bias toward basic and acidic residues. The next 4 helical transmembrane spans lie at W726–L746, T975–F995, V1162–V1182, and V1342–F1362.

It is found in the membrane. This Dictyostelium discoideum (Social amoeba) protein is Tiny macrocysts protein C (tmcC).